The following is a 706-amino-acid chain: Fatty acid oxidation complex subunit alpha (706 aa).

The interval 1 to 188 (MEKTFNLTRR…KMGLVNDVVP (188 aa)) is enoyl-CoA hydratase. The segment at 308-706 (RKVKKAVILG…TMAQENAHFF (399 aa)) is 3-hydroxyacyl-CoA dehydrogenase.

The protein in the N-terminal section; belongs to the enoyl-CoA hydratase/isomerase family. This sequence in the central section; belongs to the 3-hydroxyacyl-CoA dehydrogenase family. Heterotetramer of two alpha chains (FadJ) and two beta chains (FadI).

It is found in the cytoplasm. It catalyses the reaction a (3S)-3-hydroxyacyl-CoA = a (2E)-enoyl-CoA + H2O. It carries out the reaction a 4-saturated-(3S)-3-hydroxyacyl-CoA = a (3E)-enoyl-CoA + H2O. The enzyme catalyses a (3S)-3-hydroxyacyl-CoA + NAD(+) = a 3-oxoacyl-CoA + NADH + H(+). The catalysed reaction is (3S)-3-hydroxybutanoyl-CoA = (3R)-3-hydroxybutanoyl-CoA. It functions in the pathway lipid metabolism; fatty acid beta-oxidation. Functionally, catalyzes the formation of a hydroxyacyl-CoA by addition of water on enoyl-CoA. Also exhibits 3-hydroxyacyl-CoA epimerase and 3-hydroxyacyl-CoA dehydrogenase activities. The sequence is that of Fatty acid oxidation complex subunit alpha from Shewanella baltica (strain OS185).